The chain runs to 119 residues: UPF0342 protein GTNG_0551 (119 aa).

Belongs to the UPF0342 family.

The chain is UPF0342 protein GTNG_0551 from Geobacillus thermodenitrificans (strain NG80-2).